The primary structure comprises 342 residues: Ferredoxin--NADP reductase (342 aa).

8 residues coordinate FAD: Cys-17, Asp-36, Gln-44, Tyr-49, Val-89, Phe-124, Asp-289, and Thr-330.

It belongs to the ferredoxin--NADP reductase type 2 family. In terms of assembly, homodimer. The cofactor is FAD.

It catalyses the reaction 2 reduced [2Fe-2S]-[ferredoxin] + NADP(+) + H(+) = 2 oxidized [2Fe-2S]-[ferredoxin] + NADPH. The chain is Ferredoxin--NADP reductase from Bradyrhizobium diazoefficiens (strain JCM 10833 / BCRC 13528 / IAM 13628 / NBRC 14792 / USDA 110).